A 1217-amino-acid polypeptide reads, in one-letter code: MTIPEKPQGVIWTDAQWQSIYATGQDVLVAAAAGSGKTAVLVERIIQKILRDGIDVDRLLVVTFTNLSAREMKHRVDQRIQEASIADPANAHLKNQRIKIHQAQISTLHSFCLKLIQQHYDVLNIDPNFRTSSEAENILLLEQTIDEVIEQHYDILDPAFIELTEQLSSDRSDDQFRMIIKQLYFFSVANPNPTNWLDQLVTPYEEEAQQAQLIQLLTDLSKVFITAAYDALNKAYDLFSMMDSVDKHLAVIEDERRLMGRVLEGGFIDIPYLTGHEFGARLPNVTAKIKEANEMMVDALEDAKLQYKKYKSLIDKVKSDYFSREADDLKADMQQLAPRVKYLARIVKDVMSEFNRKKRSKNILDFSDYEHFALQILTNEDGSPSEIAESYRQHFQEILVDEYQDTNRVQEKILSCIKTGDEHNGNLFMVGDVKQSIYKFRQADPSLFIEKYQRFTIDGDGTGRRIDLSQNFRSRKEVLSTTNYIFKHMMDEQVGEVKYDEAAQLYYGAPYDESDHPVNLKVLVEADQEHSDLTGSEQEAHFIVEQVKDILEHQKVYDMKTGSYRSATYKDIVILERSFGQARNLQQAFKNEDIPFHVNSREGYFEQTEVRLVLSFLRAIDNPLQDIYLVGLMRSVIYQFKEDELAQIRILSPNDDYFYQSIVNYINDEAADAILVDKLKMFLSDIQSYQQYSKDHPVYQLIDKFYNDHYVIQYFSGLIGGRGRRANLYGLFNKAIEFENSSFRGLYQFIRFIDELIERGKDFGEENVVGPNDNVVRMMTIHSSKGLEFPFVIYSGLSKDFNKRDLKQPVILNQQFGLGMDYFDVDKEMAFPSLASVAYRAVAEKELVSEEMRLVYVALTRAKEQLYLIGRVKNDKSLLELEQLSISGEHIAVNERLTSPNPFHLIYSILSKHQSASIPDDLKFEKDIAQVEDSSRPNVNISIIYFEDVSTETILDNNEYRSVNQLETMQNGNEDVKAQIKHQLDYQYPYVNDTKKPSKQSVSELKRQYETEESGTSYERVRQYRIGFSTYERPKFLSEQGKRKANEIGTLMHTVMQHLPFKKERISEVELHQYIDGLIDKHIIEADAKKDIRMDEIMTFINSELYSIIAEAEQVYRELPFVVNQALVDQLPQGDEDVSIIQGMIDLIFVKDGVHYFVDYKTDAFNRRRGMTDEEIGTQLKNKYKIQMKYYQNTLQTILNKEVKGYLYFFKFGTLQL.

Residues 10 to 475 enclose the UvrD-like helicase ATP-binding domain; the sequence is VIWTDAQWQS…IDLSQNFRSR (466 aa). Residue 31–38 coordinates ATP; sequence AAAGSGKT. One can recognise a UvrD-like helicase C-terminal domain in the interval 476–786; it reads KEVLSTTNYI…RMMTIHSSKG (311 aa).

The protein belongs to the helicase family. AddA subfamily. As to quaternary structure, heterodimer of AddA and AddB/RexB. Mg(2+) serves as cofactor.

It catalyses the reaction Couples ATP hydrolysis with the unwinding of duplex DNA by translocating in the 3'-5' direction.. It carries out the reaction ATP + H2O = ADP + phosphate + H(+). Its function is as follows. The heterodimer acts as both an ATP-dependent DNA helicase and an ATP-dependent, dual-direction single-stranded exonuclease. Recognizes the chi site generating a DNA molecule suitable for the initiation of homologous recombination. The AddA nuclease domain is required for chi fragment generation; this subunit has the helicase and 3' -&gt; 5' nuclease activities. The protein is ATP-dependent helicase/nuclease subunit A of Staphylococcus aureus (strain MSSA476).